The following is a 132-amino-acid chain: MVMTDPIADFLTRIRNANQVKHEVLEVPASNIKKGIAEILKREGFIKNVEVIEDGKQGIIRVFLKYGQNGERVITNLKRVSKPGLRIYSKREDVPKVLNGLGIAIISTSEGLLTDKEARQKNVGGEVIAYVW.

The protein belongs to the universal ribosomal protein uS8 family. In terms of assembly, part of the 30S ribosomal subunit. Contacts proteins S5 and S12.

One of the primary rRNA binding proteins, it binds directly to 16S rRNA central domain where it helps coordinate assembly of the platform of the 30S subunit. This chain is Small ribosomal subunit protein uS8, found in Streptococcus equi subsp. equi (strain 4047).